Here is a 367-residue protein sequence, read N- to C-terminus: NADH-quinone oxidoreductase subunit D (367 aa).

It belongs to the complex I 49 kDa subunit family. As to quaternary structure, NDH-1 is composed of 14 different subunits. Subunits NuoB, C, D, E, F, and G constitute the peripheral sector of the complex.

The protein localises to the cell membrane. The catalysed reaction is a quinone + NADH + 5 H(+)(in) = a quinol + NAD(+) + 4 H(+)(out). Its function is as follows. NDH-1 shuttles electrons from NADH, via FMN and iron-sulfur (Fe-S) centers, to quinones in the respiratory chain. The immediate electron acceptor for the enzyme in this species is believed to be ubiquinone. Couples the redox reaction to proton translocation (for every two electrons transferred, four hydrogen ions are translocated across the cytoplasmic membrane), and thus conserves the redox energy in a proton gradient. This Dehalococcoides mccartyi (strain CBDB1) protein is NADH-quinone oxidoreductase subunit D.